The primary structure comprises 206 residues: Large ribosomal subunit protein uL3 (206 aa).

Belongs to the universal ribosomal protein uL3 family. As to quaternary structure, part of the 50S ribosomal subunit. Forms a cluster with proteins L14 and L19.

One of the primary rRNA binding proteins, it binds directly near the 3'-end of the 23S rRNA, where it nucleates assembly of the 50S subunit. This is Large ribosomal subunit protein uL3 from Cytophaga hutchinsonii (strain ATCC 33406 / DSM 1761 / CIP 103989 / NBRC 15051 / NCIMB 9469 / D465).